A 155-amino-acid polypeptide reads, in one-letter code: 6,7-dimethyl-8-ribityllumazine synthase (155 aa).

5-amino-6-(D-ribitylamino)uracil contacts are provided by residues phenylalanine 23, 57-59 (AFE), and 81-83 (AVI). Residue 86-87 (ST) coordinates (2S)-2-hydroxy-3-oxobutyl phosphate. Histidine 89 serves as the catalytic Proton donor. A 5-amino-6-(D-ribitylamino)uracil-binding site is contributed by phenylalanine 114. Arginine 128 contacts (2S)-2-hydroxy-3-oxobutyl phosphate.

Belongs to the DMRL synthase family.

It carries out the reaction (2S)-2-hydroxy-3-oxobutyl phosphate + 5-amino-6-(D-ribitylamino)uracil = 6,7-dimethyl-8-(1-D-ribityl)lumazine + phosphate + 2 H2O + H(+). The protein operates within cofactor biosynthesis; riboflavin biosynthesis; riboflavin from 2-hydroxy-3-oxobutyl phosphate and 5-amino-6-(D-ribitylamino)uracil: step 1/2. Catalyzes the formation of 6,7-dimethyl-8-ribityllumazine by condensation of 5-amino-6-(D-ribitylamino)uracil with 3,4-dihydroxy-2-butanone 4-phosphate. This is the penultimate step in the biosynthesis of riboflavin. This chain is 6,7-dimethyl-8-ribityllumazine synthase, found in Geobacter sp. (strain M21).